Consider the following 306-residue polypeptide: Curved DNA-binding protein (306 aa).

The 65-residue stretch at 5–69 (DYYAIMGVKP…QRRAEYDQMW (65 aa)) folds into the J domain.

The protein localises to the cytoplasm. It localises to the nucleoid. Functionally, DNA-binding protein that preferentially recognizes a curved DNA sequence. It is probably a functional analog of DnaJ; displays overlapping activities with DnaJ, but functions under different conditions, probably acting as a molecular chaperone in an adaptive response to environmental stresses other than heat shock. Lacks autonomous chaperone activity; binds native substrates and targets them for recognition by DnaK. Its activity is inhibited by the binding of CbpM. This is Curved DNA-binding protein from Escherichia coli O7:K1 (strain IAI39 / ExPEC).